The sequence spans 457 residues: Heme sensor protein HssS (457 aa).

2 helical membrane passes run isoleucine 9–asparagine 29 and threonine 164–serine 184. An HAMP domain is found at tyrosine 186–glutamine 238. Positions asparagine 246–serine 456 constitute a Histidine kinase domain. A Phosphohistidine; by autocatalysis modification is found at histidine 249.

Autophosphorylated.

The protein resides in the cell membrane. The enzyme catalyses ATP + protein L-histidine = ADP + protein N-phospho-L-histidine.. In terms of biological role, member of the two-component regulatory system HssS/HssR involved in intracellular heme homeostasis and tempering of staphylococcal virulence. HssS functions as a heme sensor histidine kinase which is autophosphorylated at a histidine residue and transfers its phosphate group to an aspartate residue of HssR. HssR/HssS activates the expression of hrtAB, an efflux pump, in response to extracellular heme, hemin, hemoglobin or blood. The polypeptide is Heme sensor protein HssS (hssS) (Staphylococcus aureus (strain USA300)).